Consider the following 1017-residue polypeptide: Pikachurin (1017 aa).

The first 24 residues, 1-24 (MDLIRGVLLRLLLLASSLGPGAVS), serve as a signal peptide directing secretion. Fibronectin type-III domains follow at residues 37 to 136 (PPLD…TLSQ) and 144 to 239 (APQQ…TLCP). Asn47 is a glycosylation site (N-linked (GlcNAc...) asparagine). Positions 343–381 (FDMPCDETLCSADSFCVNDYTWGGSRCQCTLGKGGESCS) constitute an EGF-like 1 domain. 11 disulfides stabilise this stretch: Cys347/Cys358, Cys352/Cys369, Cys371/Cys380, Cys534/Cys564, Cys569/Cys580, Cys574/Cys590, Cys592/Cys601, Cys788/Cys799, Cys793/Cys808, Cys810/Cys819, and Cys987/Cys1014. A Laminin G-like 1 domain is found at 386–564 (IQYPQFFGHS…ALSGADVGEC (179 aa)). 2 consecutive EGF-like domains span residues 565–602 (SSGI…RHCE) and 784–820 (AAHP…LHCQ). A Laminin G-like 2 domain is found at 609–788 (IPQFRESLRS…VNVENAAHPC (180 aa)). A Laminin G-like 3 domain is found at 835–1014 (IEIPQFIGRS…AVDGKNINTC (180 aa)).

As to quaternary structure, interacts with DAG1 alpha-dystroglycan. Interacts with GPR158 and GPR179; transsynaptic interaction is required for synaptic organization of photoreceptor cells. In terms of processing, O-glycosylated; contains chondroitin sulfate and heparan sulfate.

The protein localises to the secreted. The protein resides in the extracellular space. Its subcellular location is the extracellular matrix. It localises to the synaptic cleft. It is found in the presynaptic active zone. Functionally, involved in both the retinal photoreceptor ribbon synapse formation and physiological functions of visual perception. Plays a key role in the synaptic organization of photoreceptors by mediating transsynaptic interaction between alpha-dystroglycan and GPR179 on the postsynaptic membrane. Necessary for proper bipolar dendritic tip apposition to the photoreceptor ribbon synapse. Promotes matrix assembly and cell adhesiveness. In Homo sapiens (Human), this protein is Pikachurin (EGFLAM).